We begin with the raw amino-acid sequence, 188 residues long: Peptidyl-tRNA hydrolase (188 aa).

Tyr16 is a binding site for tRNA. The Proton acceptor role is filled by His21. TRNA-binding residues include Phe66, Asn68, and Asn114.

Belongs to the PTH family. As to quaternary structure, monomer.

The protein resides in the cytoplasm. The catalysed reaction is an N-acyl-L-alpha-aminoacyl-tRNA + H2O = an N-acyl-L-amino acid + a tRNA + H(+). Functionally, hydrolyzes ribosome-free peptidyl-tRNAs (with 1 or more amino acids incorporated), which drop off the ribosome during protein synthesis, or as a result of ribosome stalling. In terms of biological role, catalyzes the release of premature peptidyl moieties from peptidyl-tRNA molecules trapped in stalled 50S ribosomal subunits, and thus maintains levels of free tRNAs and 50S ribosomes. The chain is Peptidyl-tRNA hydrolase from Citrifermentans bemidjiense (strain ATCC BAA-1014 / DSM 16622 / JCM 12645 / Bem) (Geobacter bemidjiensis).